A 289-amino-acid chain; its full sequence is Methionyl-tRNA formyltransferase (289 aa).

106-109 contributes to the (6S)-5,6,7,8-tetrahydrofolate binding site; sequence SLLP.

The protein belongs to the Fmt family.

The catalysed reaction is L-methionyl-tRNA(fMet) + (6R)-10-formyltetrahydrofolate = N-formyl-L-methionyl-tRNA(fMet) + (6S)-5,6,7,8-tetrahydrofolate + H(+). In terms of biological role, attaches a formyl group to the free amino group of methionyl-tRNA(fMet). The formyl group appears to play a dual role in the initiator identity of N-formylmethionyl-tRNA by promoting its recognition by IF2 and preventing the misappropriation of this tRNA by the elongation apparatus. The sequence is that of Methionyl-tRNA formyltransferase from Mycoplasmopsis pulmonis (strain UAB CTIP) (Mycoplasma pulmonis).